Consider the following 190-residue polypeptide: Isopentenyl-diphosphate Delta-isomerase (190 aa).

Mn(2+)-binding residues include His-27 and His-34. Residues 32–166 (ALHLAFSCHV…PWAFSPWLTL (135 aa)) enclose the Nudix hydrolase domain. Cys-69 is an active-site residue. His-71 provides a ligand contact to Mn(2+). Position 89 (Glu-89) interacts with Mg(2+). 2 residues coordinate Mn(2+): Glu-116 and Glu-118. Glu-118 is a catalytic residue.

This sequence belongs to the IPP isomerase type 1 family. The cofactor is Mg(2+). Requires Mn(2+) as cofactor.

It localises to the cytoplasm. The enzyme catalyses isopentenyl diphosphate = dimethylallyl diphosphate. It functions in the pathway isoprenoid biosynthesis; dimethylallyl diphosphate biosynthesis; dimethylallyl diphosphate from isopentenyl diphosphate: step 1/1. Catalyzes the 1,3-allylic rearrangement of the homoallylic substrate isopentenyl (IPP) to its highly electrophilic allylic isomer, dimethylallyl diphosphate (DMAPP). This is Isopentenyl-diphosphate Delta-isomerase from Clavibacter sepedonicus (Clavibacter michiganensis subsp. sepedonicus).